Here is a 518-residue protein sequence, read N- to C-terminus: FAD-dependent monooxygenase tpcD (518 aa).

The first 22 residues, 1–22 (MQLLGTLSWLYAIQASIGSSKA), serve as a signal peptide directing secretion. An N-linked (GlcNAc...) asparagine glycan is attached at N61. The FAD-binding PCMH-type domain maps to 75 to 246 (QSAQPACLVH…TRFDLDVFQQ (172 aa)). A Pros-8alpha-FAD histidine modification is found at H112. N163, N208, N216, and N346 each carry an N-linked (GlcNAc...) asparagine glycan.

The protein belongs to the oxygen-dependent FAD-linked oxidoreductase family. FAD serves as cofactor.

It functions in the pathway secondary metabolite biosynthesis; terpenoid biosynthesis. Its function is as follows. FAD-dependent monooxygenase; part of the gene cluster that mediates the biosynthesis of terpestacin. The bifunctional terpene synthase tpcA converts isopentenyl diphosphate (IPP) and dimethylallyl diphosphate (DMAPP) into the sesterterpene preterpestacin I. The C-terminal prenyltransferase (PT) domain of tpcA catalyzes formation of GFPP, whereas the N-terminal terpene cyclase (TC) domain catalyzes the cyclization of GFPP into preterpestacin I. The cytochrome P450 monooxygenase tpcB then hydroxylates preterpestacin I to yield 24-hydroxypreterpstacin I (renamed as preterpestacin II) whereas the cytochrome P450 monooxygenase tpcC further hydroxylates preterpestacin II to yield 16,17-dihydroxypreterpestacin II (renamed as preterpestacin III). Finally, the FAD-dependent monooxygenase tpcD converts preterpestacin III into terpestacin. This chain is FAD-dependent monooxygenase tpcD, found in Cochliobolus heterostrophus (strain C5 / ATCC 48332 / race O) (Southern corn leaf blight fungus).